We begin with the raw amino-acid sequence, 103 residues long: Large ribosomal subunit protein uL24 (103 aa).

It belongs to the universal ribosomal protein uL24 family. As to quaternary structure, part of the 50S ribosomal subunit.

One of two assembly initiator proteins, it binds directly to the 5'-end of the 23S rRNA, where it nucleates assembly of the 50S subunit. Functionally, one of the proteins that surrounds the polypeptide exit tunnel on the outside of the subunit. The sequence is that of Large ribosomal subunit protein uL24 from Syntrophomonas wolfei subsp. wolfei (strain DSM 2245B / Goettingen).